The primary structure comprises 550 residues: Calcium-dependent protein kinase 20 (550 aa).

The tract at residues 1–58 is disordered; that stretch reads MGNCCVTPEGSGRGRKKQQQEQKQKQKEPKQQQQQQKKGKKPNPFSIEYNRSSAPSGH. G2 carries N-myristoyl glycine lipidation. A compositionally biased stretch (basic and acidic residues) spans 18 to 30; that stretch reads QQQEQKQKQKEPK. The Protein kinase domain maps to 75–333; sequence YELGGELGRG…AQQVLDHPWL (259 aa). ATP is bound by residues 81–89 and K104; that span reads LGRGEFGVT. D199 functions as the Proton acceptor in the catalytic mechanism. The segment at 339-369 is autoinhibitory domain; sequence APNVNLGETVKARLQQFSVMNKFKKHALRVI. 4 EF-hand domains span residues 376–411, 412–447, 448–483, and 484–519; these read EEVA…LGHQ, MADA…LRKI, GNDE…DLGA, and NHEE…GTDW. Residues D389, N391, D393, M395, E400, D425, D427, N429, S431, E436, D461, N463, S465, Y467, E472, D497, D499, D501, K503, and E508 each contribute to the Ca(2+) site.

Belongs to the protein kinase superfamily. Ser/Thr protein kinase family. CDPK subfamily. In terms of tissue distribution, expressed in roots and leaf blades.

Its subcellular location is the membrane. It carries out the reaction L-seryl-[protein] + ATP = O-phospho-L-seryl-[protein] + ADP + H(+). The catalysed reaction is L-threonyl-[protein] + ATP = O-phospho-L-threonyl-[protein] + ADP + H(+). With respect to regulation, activated by calcium. Autophosphorylation may play an important role in the regulation of the kinase activity. Functionally, may play a role in signal transduction pathways that involve calcium as a second messenger. This Oryza sativa subsp. japonica (Rice) protein is Calcium-dependent protein kinase 20.